The primary structure comprises 338 residues: Lipoate-protein ligase A (338 aa).

A BPL/LPL catalytic domain is found at 29 to 216 (PATQRVLFLW…AFFAHYGERV (188 aa)). ATP contacts are provided by residues Arg71, 76–79 (GAVF), and Lys134. A (R)-lipoate-binding site is contributed by Lys134.

Belongs to the LplA family. Monomer.

The protein localises to the cytoplasm. The enzyme catalyses L-lysyl-[lipoyl-carrier protein] + (R)-lipoate + ATP = N(6)-[(R)-lipoyl]-L-lysyl-[lipoyl-carrier protein] + AMP + diphosphate + H(+). It participates in protein modification; protein lipoylation via exogenous pathway; protein N(6)-(lipoyl)lysine from lipoate: step 1/2. It functions in the pathway protein modification; protein lipoylation via exogenous pathway; protein N(6)-(lipoyl)lysine from lipoate: step 2/2. Catalyzes both the ATP-dependent activation of exogenously supplied lipoate to lipoyl-AMP and the transfer of the activated lipoyl onto the lipoyl domains of lipoate-dependent enzymes. The protein is Lipoate-protein ligase A of Shigella dysenteriae serotype 1 (strain Sd197).